The sequence spans 346 residues: MHFEEKIALNKALFSSLYDKEIQCFKSPLKAYRTRAEFCIYHHENGEISYAMYENKKKIPIKNFEIADEKIQAYMPILLDNLNENLKHKLFGVEFLATKIDLSITLLYHKNIESITQDLQELSKKLNLKLIARSRGKKLVFNGENLKQILNIKNKEIFYEFNNDCFIQPNTTINEKMIEWVIDLLEKEERKDLLELYCGYGNFTIALAKYFNKILATEISKKNIEFALKNCDLNSIKNISFTRLSSEELSQALKKEREFNRLKGIDLDGFNISHVLVDPPRAGLDVSVIELIKKYENIIYISCNPITLRENLEILSQSHEILNLAFFDQFANTSHLECGVHLRLKA.

Gln-168, Tyr-197, Asn-202, Glu-218, and Asp-278 together coordinate S-adenosyl-L-methionine. The Nucleophile role is filled by Cys-303. Glu-337 (proton acceptor) is an active-site residue.

This sequence belongs to the class I-like SAM-binding methyltransferase superfamily. RNA M5U methyltransferase family. TrmA subfamily.

The enzyme catalyses uridine(54) in tRNA + S-adenosyl-L-methionine = 5-methyluridine(54) in tRNA + S-adenosyl-L-homocysteine + H(+). It catalyses the reaction uridine(341) in tmRNA + S-adenosyl-L-methionine = 5-methyluridine(341) in tmRNA + S-adenosyl-L-homocysteine + H(+). Dual-specificity methyltransferase that catalyzes the formation of 5-methyluridine at position 54 (m5U54) in all tRNAs, and that of position 341 (m5U341) in tmRNA (transfer-mRNA). This chain is tRNA/tmRNA (uracil-C(5))-methyltransferase, found in Campylobacter lari (strain RM2100 / D67 / ATCC BAA-1060).